Consider the following 485-residue polypeptide: Glutamyl-tRNA(Gln) amidotransferase subunit A (485 aa).

Residues lysine 79 and serine 154 each act as charge relay system in the active site. Serine 178 acts as the Acyl-ester intermediate in catalysis.

It belongs to the amidase family. GatA subfamily. Heterotrimer of A, B and C subunits.

It catalyses the reaction L-glutamyl-tRNA(Gln) + L-glutamine + ATP + H2O = L-glutaminyl-tRNA(Gln) + L-glutamate + ADP + phosphate + H(+). Allows the formation of correctly charged Gln-tRNA(Gln) through the transamidation of misacylated Glu-tRNA(Gln) in organisms which lack glutaminyl-tRNA synthetase. The reaction takes place in the presence of glutamine and ATP through an activated gamma-phospho-Glu-tRNA(Gln). The polypeptide is Glutamyl-tRNA(Gln) amidotransferase subunit A (Bacillus velezensis (strain DSM 23117 / BGSC 10A6 / LMG 26770 / FZB42) (Bacillus amyloliquefaciens subsp. plantarum)).